The following is a 205-amino-acid chain: Holliday junction branch migration complex subunit RuvA (205 aa).

The segment at Met-1 to Lys-62 is domain I. The segment at Thr-63–Leu-141 is domain II. A flexible linker region spans residues Phe-142–Lys-152. The interval Gly-153–Arg-205 is domain III.

This sequence belongs to the RuvA family. In terms of assembly, homotetramer. Forms an RuvA(8)-RuvB(12)-Holliday junction (HJ) complex. HJ DNA is sandwiched between 2 RuvA tetramers; dsDNA enters through RuvA and exits via RuvB. An RuvB hexamer assembles on each DNA strand where it exits the tetramer. Each RuvB hexamer is contacted by two RuvA subunits (via domain III) on 2 adjacent RuvB subunits; this complex drives branch migration. In the full resolvosome a probable DNA-RuvA(4)-RuvB(12)-RuvC(2) complex forms which resolves the HJ.

The protein resides in the cytoplasm. In terms of biological role, the RuvA-RuvB-RuvC complex processes Holliday junction (HJ) DNA during genetic recombination and DNA repair, while the RuvA-RuvB complex plays an important role in the rescue of blocked DNA replication forks via replication fork reversal (RFR). RuvA specifically binds to HJ cruciform DNA, conferring on it an open structure. The RuvB hexamer acts as an ATP-dependent pump, pulling dsDNA into and through the RuvAB complex. HJ branch migration allows RuvC to scan DNA until it finds its consensus sequence, where it cleaves and resolves the cruciform DNA. In Bacillus cereus (strain AH187), this protein is Holliday junction branch migration complex subunit RuvA.